The primary structure comprises 320 residues: MHVASALMVEQKGSEAAASSPDVLRAWATQYHMPSESSDAARPALKHAYKPPASDAKGITMALTIIGTWTAVFLHAIFQIRLPTSMDQLHWLPVSEATAQLLGGSSSLLHIAAVFIVLEFLYTGLFITTHDAMHGTIALRHRQLNDLLGNICISLYAWFDYSMLHRKHWEHHNHTGEVGKDPDFHKGNPGLVPWFASFMSSYMSLWQFARLAWWAVVMQMLGAPMANLLVFMAAAPILSAFRLFYFGTYLPHKPEPGPAAGSQVMAWFRAKTSEASDVMSFLTCYHFDLHWEHHRWPFAPWWQLPHCRRLSGRGLVPALA.

The catalysed reaction is all-trans-beta-carotene + 2 AH2 + 2 O2 = echinenone + 2 A + 3 H2O. It carries out the reaction echinenone + 2 AH2 + 2 O2 = canthaxanthin + 2 A + 3 H2O. The protein operates within carotenoid biosynthesis; astaxanthin biosynthesis. Converts beta-carotene to canthaxanthin via echinenone. This Haematococcus lacustris (Green alga) protein is Beta-carotene ketolase.